The sequence spans 95 residues: uncharacterized protein (95 aa).

Positions 14-50 (KMEQKLQEQLDGLLEKYTELLLGETNDELKEEVKQWI) form a coiled coil.

This is an uncharacterized protein from Bacillus subtilis (strain 168).